A 56-amino-acid polypeptide reads, in one-letter code: Large ribosomal subunit protein bL33 (56 aa).

The protein belongs to the bacterial ribosomal protein bL33 family.

The protein is Large ribosomal subunit protein bL33 (rpmG) of Rickettsia prowazekii (strain Madrid E).